The chain runs to 341 residues: Glucokinase (341 aa).

18–23 (GDIGGT) provides a ligand contact to ATP.

Belongs to the bacterial glucokinase family.

The protein resides in the cytoplasm. The enzyme catalyses D-glucose + ATP = D-glucose 6-phosphate + ADP + H(+). In Rhizobium johnstonii (strain DSM 114642 / LMG 32736 / 3841) (Rhizobium leguminosarum bv. viciae), this protein is Glucokinase.